The sequence spans 79 residues: Dolichyl-diphosphooligosaccharide--protein glycosyltransferase subunit TMEM258 (79 aa).

N-acetylmethionine is present on M1. 2 consecutive transmembrane segments (helical) span residues 17-37 and 59-79; these read VFPHLTVVLLAIGMFFTAWFF and VASLFMGFGVLFLLLWVGIYI.

This sequence belongs to the OST5 family. In terms of assembly, component of the oligosaccharyltransferase (OST) complex. OST exists in two different complex forms which contain common core subunits RPN1, RPN2, OST48, OST4, DAD1 and TMEM258, either STT3A or STT3B as catalytic subunits, and form-specific accessory subunits. STT3A complex assembly occurs through the formation of 3 subcomplexes. Subcomplex 1 contains RPN1 and TMEM258, subcomplex 2 contains the STT3A-specific subunits STT3A, DC2/OSTC, and KCP2 as well as the core subunit OST4, and subcomplex 3 contains RPN2, DAD1, and OST48. The STT3A complex can form stable complexes with the Sec61 complex or with both the Sec61 and TRAP complexes.

The protein resides in the membrane. It localises to the endoplasmic reticulum. It is found in the cytoplasm. It functions in the pathway protein modification; protein glycosylation. Its function is as follows. Subunit of the oligosaccharyl transferase (OST) complex that catalyzes the initial transfer of a defined glycan (Glc(3)Man(9)GlcNAc(2) in eukaryotes) from the lipid carrier dolichol-pyrophosphate to an asparagine residue within an Asn-X-Ser/Thr consensus motif in nascent polypeptide chains, the first step in protein N-glycosylation. N-glycosylation occurs cotranslationally and the complex associates with the Sec61 complex at the channel-forming translocon complex that mediates protein translocation across the endoplasmic reticulum (ER). All subunits are required for a maximal enzyme activity. Involved in ER homeostasis in the colonic epithelium. The protein is Dolichyl-diphosphooligosaccharide--protein glycosyltransferase subunit TMEM258 of Bos taurus (Bovine).